Here is a 511-residue protein sequence, read N- to C-terminus: Maturase K (511 aa).

The protein belongs to the intron maturase 2 family. MatK subfamily.

It localises to the plastid. The protein localises to the chloroplast. Functionally, usually encoded in the trnK tRNA gene intron. Probably assists in splicing its own and other chloroplast group II introns. The polypeptide is Maturase K (Maihuenia poeppigii (Hardy cactus)).